We begin with the raw amino-acid sequence, 72 residues long: Crustacean hyperglycemic hormone (72 aa).

At Q1 the chain carries Pyrrolidone carboxylic acid; partial. Disulfide bonds link C7–C43, C23–C39, and C26–C52. V72 carries the valine amide modification.

It belongs to the arthropod CHH/MIH/GIH/VIH hormone family. In terms of processing, the N-terminus forms pyrrolidone carboxylic acid in isoform CHH-II and is free in isoform CHH-I. Produced by the medulla terminalis X-organ in the eyestalks and transported to the sinus gland where they are stored and released.

It is found in the secreted. Hormone found in the sinus gland of isopods and decapods which controls the blood sugar level. Has a secretagogue action over the amylase released from the midgut gland. May act as a stress hormone and may be involved in the control of molting and reproduction. The polypeptide is Crustacean hyperglycemic hormone (Cancer pagurus (Rock crab)).